A 426-amino-acid polypeptide reads, in one-letter code: COP9 signalosome complex subunit 6 (426 aa).

The MPN domain maps to 14 to 155 (VLLHPLVIMQ…AGTTRKLPLF (142 aa)). Residues 320–426 (PVRFKSQHLG…NESDESSQAS (107 aa)) are disordered. A compositionally biased stretch (acidic residues) spans 334-347 (ADDDDYFDDEDLEN).

It belongs to the peptidase M67A family. CSN6 subfamily. Component of the CSN complex, probably composed of csn-1, csn-2, csn-3, csn-4, csn-5, csn-6 and csn-7. Within the complex it probably interacts directly with csn-2 and csn-4. Interacts with rbx-1.

It is found in the cytoplasm. Its subcellular location is the nucleus. Functionally, component of the COP9 signalosome complex (CSN), a complex involved in various cellular and developmental processes. The CSN complex is an essential regulator of the ubiquitin (Ubl) conjugation pathway by mediating the deneddylation of the cullin subunits of the SCF-type E3 ligase complexes, leading to decrease the Ubl ligase activity of SCF. The CSN complex plays an essential role in embryogenesis and oogenesis and is required to regulate microtubule stability in the early embryo. Mediates mei-3/katanin targeting for degradation at the meiosis to mitosis transition via deneddylation of cul-3. The protein is COP9 signalosome complex subunit 6 (csn-6) of Caenorhabditis elegans.